The chain runs to 231 residues: MAKDGGVSCLRRSEMIGIGIGELESPPLDSDQVHVLAVDDSLVDRIVIERLLRITSCKVTAVDSGWRALEFLGLDDDKAAVEFDRLKVDLIITDYCMPGMTGYELLKKIKESTSFKEVPVVIMSSENVMTRIDRCLEEGAEDFLLKPVKLADVKRLRSYLTRDVKVAAEGNKRKLTTPPPPPPLSATSSMESSDSTVESPLSMVDDEDSLTMSPESATSLVDSPMRSPGLA.

In terms of domain architecture, Response regulatory spans 34–161 (HVLAVDDSLV…DVKRLRSYLT (128 aa)). Position 94 is a 4-aspartylphosphate (aspartate 94). The tract at residues 170-231 (GNKRKLTTPP…DSPMRSPGLA (62 aa)) is disordered. Residues 185-199 (SATSSMESSDSTVES) are compositionally biased toward low complexity. Residues 210–221 (LTMSPESATSLV) are compositionally biased toward polar residues.

It belongs to the ARR family. Type-A subfamily. Post-translationally, two-component system major event consists of a His-to-Asp phosphorelay between a sensor histidine kinase (HK) and a response regulator (RR). In plants, the His-to-Asp phosphorelay involves an additional intermediate named Histidine-containing phosphotransfer protein (HPt). This multistep phosphorelay consists of a His-Asp-His-Asp sequential transfer of a phosphate group between first a His and an Asp of the HK protein, followed by the transfer to a conserved His of the HPt protein and finally the transfer to an Asp in the receiver domain of the RR protein. As to expression, predominantly expressed in roots.

It localises to the nucleus. Functions as a response regulator involved in His-to-Asp phosphorelay signal transduction system. Phosphorylation of the Asp residue in the receiver domain activates the ability of the protein to promote the transcription of target genes. Type-A response regulators seem to act as negative regulators of the cytokinin signaling. In Arabidopsis thaliana (Mouse-ear cress), this protein is Two-component response regulator ARR3 (ARR3).